Reading from the N-terminus, the 1221-residue chain is Adhesion G-protein coupled receptor G6 (1221 aa).

Positions 1 to 37 are cleaved as a signal peptide; the sequence is MMFRSDRMWSCHWKWKPSPLLFLFALYIMCVPHSVWG. Residues 38–862 lie on the Extracellular side of the membrane; sequence CANCRVVLSN…ASQLDARNTK (825 aa). The cysteines at positions 41 and 67 are disulfide-linked. The 109-residue stretch at 41 to 149 folds into the CUB domain; that stretch reads CRVVLSNPSG…KGFNASYIRV (109 aa). 2 residues coordinate Ca(2+): E89 and D97. A disulfide bridge connects residues C94 and C111. The N-linked (GlcNAc...) asparagine glycan is linked to N121. Residues D134, S136, and I137 each coordinate Ca(2+). 12 N-linked (GlcNAc...) asparagine glycosylation sites follow: N143, N206, N258, N314, N324, N353, N438, N445, N452, N485, N488, and N505. One can recognise a Pentraxin (PTX) domain in the interval 154–356; sequence RNQKVILPQT…ALKAESNLSC (203 aa). 2 disulfides stabilise this stretch: C186–C254 and C231–C277. The mediates interaction with laminin-2 stretch occupies residues 473–837; that stretch reads EPRLVLWALL…SDASETVCLC (365 aa). 2 cysteine pairs are disulfide-bonded: C525–C560 and C548–C580. N563, N593, N600, N605, N667, N673, N695, N704, N750, N776, N811, and N818 each carry an N-linked (GlcNAc...) asparagine glycan. The 184-residue stretch at 670 to 853 folds into the GAIN-B domain; that stretch reads SHVNITTRNL…GVLMDLPRSA (184 aa). Cystine bridges form between C803–C835 and C822–C837. The GPS stretch occupies residues 803 to 853; sequence CAFWDLNKNKSFGGWNTSGCVAHRDSDASETVCLCNHFTHFGVLMDLPRSA. The tract at residues 842–850 is stachel; that stretch reads HFGVLMDLP. A helical membrane pass occupies residues 863–883; sequence VLTFISYIGCGISAIFSAATL. Over 884–903 the chain is Cytoplasmic; it reads LTYVAFEKLRRDYPSKILMN. A helical transmembrane segment spans residues 904–924; sequence LSTALLFLNLLFLLDGWITSF. The Extracellular segment spans residues 925–929; it reads NVDGL. Residues 930 to 950 form a helical membrane-spanning segment; the sequence is CIAVAVLLHFFLLATFTWMGL. Topologically, residues 951-970 are cytoplasmic; that stretch reads EAIHMYIALVKVFNTYIRRY. The chain crosses the membrane as a helical span at residues 971 to 991; sequence ILKFCIIGWGLPALVVSVVLA. Over 992-1024 the chain is Extracellular; sequence SRNNNEVYGKESYGKEKGDEFCWIQDPVIFYVT. The chain crosses the membrane as a helical span at residues 1025 to 1045; sequence CAGYFGVMFFLNIAMFIVVMV. The Cytoplasmic segment spans residues 1046–1069; the sequence is QICGRNGKRSNRTLREEVLRNLRS. The helical transmembrane segment at 1070-1090 threads the bilayer; it reads VVSLTFLLGMTWGFAFFAWGP. The Extracellular segment spans residues 1091–1092; the sequence is LN. The helical transmembrane segment at 1093–1113 threads the bilayer; that stretch reads IPFMYLFSIFNSLQGLFIFIF. N1103 lines the 17alpha-hydroxyprogesterone pocket. Over 1114 to 1221 the chain is Cytoplasmic; the sequence is HCAMKENVQK…GQVLVKTGPC (108 aa). The disordered stretch occupies residues 1156 to 1176; that stretch reads NLGKSLSSSSIGSNSTYLTSK. 2 positions are modified to phosphoserine: S1165 and S1168.

It belongs to the G-protein coupled receptor 2 family. Adhesion G-protein coupled receptor (ADGR) subfamily. Heterodimer of 2 chains generated by proteolytic processing; the large extracellular N-terminal fragment and the membrane-bound C-terminal fragment predominantly remain associated and non-covalently linked. Interacts with Laminin-2; this interaction stabilizes the receptor in an inactive state. Laminin-2 polymerization could facilitate ADGRG6-NTF removal, thereby exposing the tethered agonist to drive myelination. Interacts with PRNP. Interacts with ITGB1. Interacts with LRP1. Post-translationally, proteolytically cleaved into 2 conserved sites: one in the GPS region of the GAIN-B domain (S1 site) and the other in the middle of the extracellular domain (S2 site). The proteolytic cleavage at S1 site generates an extracellular subunit and a seven-transmembrane subunit. Furin is involved in the cleavage of the S2 site generating a soluble fragment. Processing at the GPS region occurred independent of and probably prior to the cleavage at the S2 site. Proteolytic cleavage is required for activation of the receptor. In terms of processing, highly glycosylated. Expressed in placenta and to a lower extent in pancreas and liver. Detected in aortic endothelial cells but not in skin microvascular endothelial cells.

The protein resides in the cell membrane. Its activity is regulated as follows. Forms a heterodimer of 2 chains generated by proteolytic processing that remain associated through non-covalent interactions mediated by the GAIN-B domain. In the inactivated receptor, the Stachel sequence (also named stalk) is embedded in the GAIN-B domain, where it adopts a beta-strand conformation. On activation, the Stachel moves into the 7 transmembrane region and adopts a twisted hook-shaped configuration that forms contacts within the receptor, leading to coupling of a G-alpha protein, which activates signaling. The cleaved GAIN-B and N-terminal domains can then dissociate from the rest of the receptor. Its function is as follows. Adhesion G-protein coupled receptor (aGPCR) for steroid hormones, such as progesterone and 17alpha-hydroxyprogesterone (17OHP). Involved in many biological processes, such as myelination, sprouting angiogenesis, placenta, ear and cartilage development. Ligand binding causes a conformation change that triggers signaling via guanine nucleotide-binding proteins (G proteins) and modulates the activity of downstream effectors, such as adenylate cyclase. ADGRG6 is coupled to G(i) G alpha proteins and mediates inhibition of adenylate cyclase. Also able to couple to G(q) G proteins. Involved in myelination of the peripheral nervous system: required for differentiation of promyelinating Schwann cells and for normal myelination of axons. Also acts as a regulator of body length and bone mass. Acts as a regulator of blood-brain barrier formation in the central nervous system vie its association with LRP1 and ITGB1. This chain is Adhesion G-protein coupled receptor G6, found in Homo sapiens (Human).